The sequence spans 67 residues: Beta-defensin 103A (67 aa).

Positions 1-22 (MRIHYLLFTLLFLFLVPVPGHG) are cleaved as a signal peptide. Disulfide bonds link C33–C62, C40–C55, and C45–C63.

It belongs to the beta-defensin family.

It is found in the secreted. In terms of biological role, exhibits antimicrobial activity against Gram-positive and Gram-negative bacteria. This is Beta-defensin 103A (DEFB103A) from Gorilla gorilla gorilla (Western lowland gorilla).